The sequence spans 295 residues: (R)-3-hydroxydecanoyl-ACP:CoA transacylase (295 aa).

The AB hydrolase-1 domain maps to 28-254 (NTIILINGSL…VIRDAGHFLD (227 aa)).

It functions in the pathway polyester biosynthesis; polyhydroxyalkanoate biosynthesis. Catalyzes the transfer of the acyl moiety from in vitro synthesized 3-hydroxydecanoyl-CoA to acyl carrier protein. This is (R)-3-hydroxydecanoyl-ACP:CoA transacylase (phaG) from Ectopseudomonas oleovorans (Pseudomonas oleovorans).